Here is a 244-residue protein sequence, read N- to C-terminus: Probable ABC transporter ATP-binding protein in ycf23-apcF intergenic region (244 aa).

The ABC transporter domain occupies Leu9 to Ile241. ATP is bound at residue Gly41–Ser48.

This sequence belongs to the ABC transporter superfamily.

Its subcellular location is the plastid. The protein resides in the cyanelle. This chain is Probable ABC transporter ATP-binding protein in ycf23-apcF intergenic region, found in Cyanophora paradoxa.